The sequence spans 51 residues: rpoE leader peptide (51 aa).

A short protein whose stop codon overlaps with the start codon of downstream rpoE; a premature stop codon at position 12 results in decreased expression of ECF sigma factor RpoE, thus they are translationally coupled. This chain is rpoE leader peptide, found in Escherichia coli (strain K12).